The chain runs to 219 residues: Probable nicotinate-nucleotide adenylyltransferase (219 aa).

The protein belongs to the NadD family.

The catalysed reaction is nicotinate beta-D-ribonucleotide + ATP + H(+) = deamido-NAD(+) + diphosphate. The protein operates within cofactor biosynthesis; NAD(+) biosynthesis; deamido-NAD(+) from nicotinate D-ribonucleotide: step 1/1. Functionally, catalyzes the reversible adenylation of nicotinate mononucleotide (NaMN) to nicotinic acid adenine dinucleotide (NaAD). The chain is Probable nicotinate-nucleotide adenylyltransferase from Cronobacter sakazakii (strain ATCC BAA-894) (Enterobacter sakazakii).